We begin with the raw amino-acid sequence, 172 residues long: Large ribosomal subunit protein uL10 (172 aa).

This sequence belongs to the universal ribosomal protein uL10 family. In terms of assembly, part of the ribosomal stalk of the 50S ribosomal subunit. The N-terminus interacts with L11 and the large rRNA to form the base of the stalk. The C-terminus forms an elongated spine to which L12 dimers bind in a sequential fashion forming a multimeric L10(L12)X complex.

Forms part of the ribosomal stalk, playing a central role in the interaction of the ribosome with GTP-bound translation factors. This is Large ribosomal subunit protein uL10 from Macrococcus caseolyticus (strain JCSC5402) (Macrococcoides caseolyticum).